Here is a 359-residue protein sequence, read N- to C-terminus: DNA polymerase IV (359 aa).

Residues 4–184 enclose the UmuC domain; sequence IVHVDMDAFY…LKVNRIPGVG (181 aa). Residues aspartate 8 and aspartate 102 each contribute to the Mg(2+) site. The active site involves glutamate 103.

This sequence belongs to the DNA polymerase type-Y family. In terms of assembly, monomer. Mg(2+) serves as cofactor.

Its subcellular location is the cytoplasm. The enzyme catalyses DNA(n) + a 2'-deoxyribonucleoside 5'-triphosphate = DNA(n+1) + diphosphate. Its function is as follows. Poorly processive, error-prone DNA polymerase involved in untargeted mutagenesis. Copies undamaged DNA at stalled replication forks, which arise in vivo from mismatched or misaligned primer ends. These misaligned primers can be extended by PolIV. Exhibits no 3'-5' exonuclease (proofreading) activity. May be involved in translesional synthesis, in conjunction with the beta clamp from PolIII. This Xanthomonas axonopodis pv. citri (strain 306) protein is DNA polymerase IV.